Consider the following 231-residue polypeptide: tRNA1(Val) (adenine(37)-N6)-methyltransferase (231 aa).

Belongs to the methyltransferase superfamily. tRNA (adenine-N(6)-)-methyltransferase family.

Its subcellular location is the cytoplasm. It catalyses the reaction adenosine(37) in tRNA1(Val) + S-adenosyl-L-methionine = N(6)-methyladenosine(37) in tRNA1(Val) + S-adenosyl-L-homocysteine + H(+). Its function is as follows. Specifically methylates the adenine in position 37 of tRNA(1)(Val) (anticodon cmo5UAC). The chain is tRNA1(Val) (adenine(37)-N6)-methyltransferase from Flavobacteriaceae bacterium (strain 3519-10).